A 457-amino-acid chain; its full sequence is Serine--tRNA ligase (457 aa).

Position 252–254 (252–254 (TAE)) interacts with L-serine. ATP is bound by residues 283 to 285 (RKE) and V299. An L-serine-binding site is contributed by E306. 370-373 (EMVS) contributes to the ATP binding site. T406 lines the L-serine pocket.

It belongs to the class-II aminoacyl-tRNA synthetase family. Type-1 seryl-tRNA synthetase subfamily. As to quaternary structure, homodimer. The tRNA molecule binds across the dimer.

Its subcellular location is the cytoplasm. The catalysed reaction is tRNA(Ser) + L-serine + ATP = L-seryl-tRNA(Ser) + AMP + diphosphate + H(+). It carries out the reaction tRNA(Sec) + L-serine + ATP = L-seryl-tRNA(Sec) + AMP + diphosphate + H(+). It functions in the pathway aminoacyl-tRNA biosynthesis; selenocysteinyl-tRNA(Sec) biosynthesis; L-seryl-tRNA(Sec) from L-serine and tRNA(Sec): step 1/1. Functionally, catalyzes the attachment of serine to tRNA(Ser). Is also able to aminoacylate tRNA(Sec) with serine, to form the misacylated tRNA L-seryl-tRNA(Sec), which will be further converted into selenocysteinyl-tRNA(Sec). The sequence is that of Serine--tRNA ligase from Saccharolobus islandicus (strain Y.G.57.14 / Yellowstone #1) (Sulfolobus islandicus).